The following is a 778-amino-acid chain: Protein SPT2 homolog (778 aa).

Disordered regions lie at residues 1–21 (MDFH…GIAK), 50–625 (KKDE…AKPK), and 639–685 (VPKS…DDDD). An important for interaction with DNA region spans residues 1 to 665 (MDFHSVLKMA…PGHRPAMRPP (665 aa)). Positions 44 to 83 (VQAFLRKKDEESRRKETVEKRKKEDLLAKRKELKHDRKAR) form a coiled coil. Residues 50-78 (KKDEESRRKETVEKRKKEDLLAKRKELKH) are compositionally biased toward basic and acidic residues. The segment covering 114-135 (EEDQNDNMAAEGEEYMTEEELY) has biased composition (acidic residues). The span at 153 to 167 (QKVPKPAPGKKPPTP) shows a compositional bias: pro residues. Over residues 190-227 (RPVKKEERLRTAEELKELEFLERKAQKADRKDPKRNEQ) the composition is skewed to basic and acidic residues. Positions 193–221 (KKEERLRTAEELKELEFLERKAQKADRKD) form a coiled coil. Polar residues predominate over residues 242-269 (LKGTHSGNSKSSSTEQNGTIRKSSSDTG). The span at 270–286 (SRTEKSGSVFHTKESKK) shows a compositional bias: basic and acidic residues. Positions 312–335 (SSQPSAASNSAFGRPSGSARPSGS) are enriched in low complexity. Gly residues-rich tracts occupy residues 336-357 (SGPG…GGSA) and 365-384 (GGSG…GKPI). Over residues 385 to 394 (GGLHSSHGSG) the composition is skewed to low complexity. Positions 395–417 (KPTGGTGSGSGKPTGASGSGSGK) are enriched in gly residues. Composition is skewed to low complexity over residues 418–493 (PTGS…SGSA) and 506–559 (GSGS…PSSS). The span at 588-604 (VRPNSTSVPGSARSSLG) shows a compositional bias: polar residues. Over residues 662–671 (MRPPGPPLPP) the composition is skewed to pro residues. Residues 666–778 (GPPLPPITSS…QLKAAKKMSR (113 aa)) form an important for interaction with histones region. Residues 735 to 778 (REQQKEEARSLRLGIQEDLEELQREEEELKRKAKQLKAAKKMSR) are a coiled coil.

Belongs to the SPT2 family. Interacts with histones. Interacts with a heterotetrameric complex formed by histone H3 and H4, especially when the histone tetramer is not bound to DNA.

The protein localises to the nucleus. The protein resides in the nucleolus. In terms of biological role, histone chaperone that stabilizes pre-existing histone tetramers and regulates replication-independent histone exchange on chromatin. Required for normal chromatin refolding in the coding region of transcribed genes, and for the suppression of spurious transcription. Binds DNA and histones and promotes nucleosome assembly (in vitro). Facilitates formation of tetrameric histone complexes containing histone H3 and H4. Modulates RNA polymerase 1-mediated transcription. Binds DNA, with a preference for branched DNA species, such as Y-form DNA and Holliday junction DNA. This is Protein SPT2 homolog (spty2d1) from Xenopus tropicalis (Western clawed frog).